A 103-amino-acid chain; its full sequence is Co-chaperonin GroES (103 aa).

This sequence belongs to the GroES chaperonin family. Heptamer of 7 subunits arranged in a ring. Interacts with the chaperonin GroEL.

The protein resides in the cytoplasm. Functionally, together with the chaperonin GroEL, plays an essential role in assisting protein folding. The GroEL-GroES system forms a nano-cage that allows encapsulation of the non-native substrate proteins and provides a physical environment optimized to promote and accelerate protein folding. GroES binds to the apical surface of the GroEL ring, thereby capping the opening of the GroEL channel. This is Co-chaperonin GroES from Nostoc punctiforme (strain ATCC 29133 / PCC 73102).